Here is a 795-residue protein sequence, read N- to C-terminus: Phenylalanine--tRNA ligase beta subunit (795 aa).

Residues 39–148 (AGTFNGVKVG…IDAPIGMDFR (110 aa)) form the tRNA-binding domain. A B5 domain is found at 401–476 (PKPNKVALRR…RIYGYDNIPN (76 aa)). Asp-454, Asp-460, Glu-463, and Glu-464 together coordinate Mg(2+). The region spanning 701 to 794 (SKFPANRRDI…VSEKFGASLR (94 aa)) is the FDX-ACB domain.

The protein belongs to the phenylalanyl-tRNA synthetase beta subunit family. Type 1 subfamily. In terms of assembly, tetramer of two alpha and two beta subunits. Requires Mg(2+) as cofactor.

The protein localises to the cytoplasm. The enzyme catalyses tRNA(Phe) + L-phenylalanine + ATP = L-phenylalanyl-tRNA(Phe) + AMP + diphosphate + H(+). This is Phenylalanine--tRNA ligase beta subunit from Vibrio vulnificus (strain CMCP6).